The following is a 291-amino-acid chain: MAVGKEILTKIRSVQNTQKITKAMQMVSTSKMRKTQERMRLARPYAEKVRMVMSHLAQTNTDHGIPLLESHREIRRVGFILITSDKGLCGGLNANVLKKFLAQVQEYRNQGIEEEIVCLGSKGLMACQSIGLNVVASAVNLGDTPKMEMLLGPLTELFQRYEKHEIDRIHLVYSGFVNTMRQEPRMEVLLPIGENVIGDSAPKSPFSWEYRYEPTALAVLEYLVRRYLESVVYQALSDNMASEQAARMVAMKAATDNAGNAIKELRLVYNKSRQAAITTELSEIVAGAAAV.

Belongs to the ATPase gamma chain family. As to quaternary structure, F-type ATPases have 2 components, CF(1) - the catalytic core - and CF(0) - the membrane proton channel. CF(1) has five subunits: alpha(3), beta(3), gamma(1), delta(1), epsilon(1). CF(0) has three main subunits: a, b and c.

Its subcellular location is the cell inner membrane. Its function is as follows. Produces ATP from ADP in the presence of a proton gradient across the membrane. The gamma chain is believed to be important in regulating ATPase activity and the flow of protons through the CF(0) complex. The chain is ATP synthase gamma chain from Neisseria meningitidis serogroup C (strain 053442).